The primary structure comprises 224 residues: Thiamine-phosphate synthase (224 aa).

Residues Gln43–Lys47 and Asn75 each bind 4-amino-2-methyl-5-(diphosphooxymethyl)pyrimidine. Mg(2+) is bound by residues Asp76 and Asp95. Ser114 provides a ligand contact to 4-amino-2-methyl-5-(diphosphooxymethyl)pyrimidine. Ser141–Thr143 serves as a coordination point for 2-[(2R,5Z)-2-carboxy-4-methylthiazol-5(2H)-ylidene]ethyl phosphate. Lys144 serves as a coordination point for 4-amino-2-methyl-5-(diphosphooxymethyl)pyrimidine. A 2-[(2R,5Z)-2-carboxy-4-methylthiazol-5(2H)-ylidene]ethyl phosphate-binding site is contributed by Gly171.

The protein belongs to the thiamine-phosphate synthase family. Mg(2+) is required as a cofactor.

It catalyses the reaction 2-[(2R,5Z)-2-carboxy-4-methylthiazol-5(2H)-ylidene]ethyl phosphate + 4-amino-2-methyl-5-(diphosphooxymethyl)pyrimidine + 2 H(+) = thiamine phosphate + CO2 + diphosphate. It carries out the reaction 2-(2-carboxy-4-methylthiazol-5-yl)ethyl phosphate + 4-amino-2-methyl-5-(diphosphooxymethyl)pyrimidine + 2 H(+) = thiamine phosphate + CO2 + diphosphate. The enzyme catalyses 4-methyl-5-(2-phosphooxyethyl)-thiazole + 4-amino-2-methyl-5-(diphosphooxymethyl)pyrimidine + H(+) = thiamine phosphate + diphosphate. Its pathway is cofactor biosynthesis; thiamine diphosphate biosynthesis; thiamine phosphate from 4-amino-2-methyl-5-diphosphomethylpyrimidine and 4-methyl-5-(2-phosphoethyl)-thiazole: step 1/1. Functionally, condenses 4-methyl-5-(beta-hydroxyethyl)thiazole monophosphate (THZ-P) and 2-methyl-4-amino-5-hydroxymethyl pyrimidine pyrophosphate (HMP-PP) to form thiamine monophosphate (TMP). The polypeptide is Thiamine-phosphate synthase (Methylococcus capsulatus (strain ATCC 33009 / NCIMB 11132 / Bath)).